A 288-amino-acid polypeptide reads, in one-letter code: Probable prolyl 4-hydroxylase 9 (288 aa).

The Cytoplasmic segment spans residues 1–12 (MKSRLKSYRRKK). Residues 13–33 (LGLATVIVFCSLCFLFGFYGS) traverse the membrane as a helical; Signal-anchor for type II membrane protein segment. At 34 to 288 (TLLSQNVPRV…KWIRDQDQEE (255 aa)) the chain is on the lumenal side. The Fe2OG dioxygenase domain occupies 164–283 (HGESFNILRY…KWVATKWIRD (120 aa)). Positions 182 and 184 each coordinate Fe cation. N-linked (GlcNAc...) asparagine glycosylation is found at Asn221 and Asn255. His264 contacts Fe cation. Residue Lys274 coordinates 2-oxoglutarate.

It belongs to the P4HA family. It depends on Fe(2+) as a cofactor. L-ascorbate serves as cofactor.

The protein resides in the endoplasmic reticulum membrane. The protein localises to the golgi apparatus. The catalysed reaction is L-prolyl-[collagen] + 2-oxoglutarate + O2 = trans-4-hydroxy-L-prolyl-[collagen] + succinate + CO2. In terms of biological role, catalyzes the post-translational formation of 4-hydroxyproline in -Xaa-Pro-Gly- sequences in proline-rich peptide sequences of plant glycoproteins and other proteins. Hydroxyprolines are important constituent of many plant cell wall glycoproteins such as extensins, hydroxyproline-rich glycoproteins, lectins and arabinogalactan proteins. The sequence is that of Probable prolyl 4-hydroxylase 9 from Arabidopsis thaliana (Mouse-ear cress).